We begin with the raw amino-acid sequence, 189 residues long: Interferon alpha-1 (189 aa).

The first 23 residues, Met-1–Gly-23, serve as a signal peptide directing secretion. 2 cysteine pairs are disulfide-bonded: Cys-24–Cys-122 and Cys-52–Cys-162.

This sequence belongs to the alpha/beta interferon family. Interacts with CR2.

It is found in the secreted. In terms of biological role, produced by macrophages, IFN-alpha have antiviral activities. Interferon stimulates the production of two enzymes: a protein kinase and an oligoadenylate synthetase. In Sus scrofa (Pig), this protein is Interferon alpha-1.